Reading from the N-terminus, the 532-residue chain is Nectin-4 (532 aa).

An N-terminal signal peptide occupies residues Met1–Cys30. One can recognise an Ig-like V-type domain in the interval Gly31–Lys142. The Extracellular segment spans residues Gly31–Leu344. 3 disulfides stabilise this stretch: Cys51–Cys125, Cys169–Cys221, and Cys266–Cys312. Ig-like C2-type domains lie at Pro146–Thr235 and Ala244–Ser328. Residues Gly152–Leu179 are disordered. N-linked (GlcNAc...) asparagine glycans are attached at residues Asn189 and Asn282. A helical transmembrane segment spans residues Gly345–Val365. Residues Asn366–Val532 lie on the Cytoplasmic side of the membrane. Positions Gln453–Met491 are disordered. Residues Pro461 to Gln474 show a composition bias toward acidic residues.

This sequence belongs to the nectin family.

Its subcellular location is the cell membrane. In terms of biological role, may be involved in cell adhesion. The sequence is that of Nectin-4 from Xenopus tropicalis (Western clawed frog).